The primary structure comprises 515 residues: ATP synthase subunit alpha (515 aa).

ATP is bound at residue 171 to 178; that stretch reads GDRQTGKT.

It belongs to the ATPase alpha/beta chains family. In terms of assembly, F-type ATPases have 2 components, CF(1) - the catalytic core - and CF(0) - the membrane proton channel. CF(1) has five subunits: alpha(3), beta(3), gamma(1), delta(1), epsilon(1). CF(0) has three main subunits: a(1), b(2) and c(9-12). The alpha and beta chains form an alternating ring which encloses part of the gamma chain. CF(1) is attached to CF(0) by a central stalk formed by the gamma and epsilon chains, while a peripheral stalk is formed by the delta and b chains.

It is found in the cell inner membrane. It catalyses the reaction ATP + H2O + 4 H(+)(in) = ADP + phosphate + 5 H(+)(out). In terms of biological role, produces ATP from ADP in the presence of a proton gradient across the membrane. The alpha chain is a regulatory subunit. This chain is ATP synthase subunit alpha, found in Stenotrophomonas maltophilia (strain R551-3).